The primary structure comprises 54 residues: Large ribosomal subunit protein bL33A (54 aa).

The protein belongs to the bacterial ribosomal protein bL33 family.

This is Large ribosomal subunit protein bL33A from Mycobacteroides abscessus (strain ATCC 19977 / DSM 44196 / CCUG 20993 / CIP 104536 / JCM 13569 / NCTC 13031 / TMC 1543 / L948) (Mycobacterium abscessus).